The sequence spans 136 residues: Large ribosomal subunit protein uL16c (136 aa).

Belongs to the universal ribosomal protein uL16 family. Part of the 50S ribosomal subunit.

The protein localises to the plastid. It localises to the chloroplast. The sequence is that of Large ribosomal subunit protein uL16c from Mesostigma viride (Green alga).